The chain runs to 78 residues: Short neurotoxin SNTX26 (78 aa).

The signal sequence occupies residues 1 to 21 (MKTLLLTFLVVTIVCLDLGYT). Disulfide bonds link Cys24-Cys40, Cys33-Cys58, Cys62-Cys70, and Cys71-Cys76.

It belongs to the three-finger toxin family. Short-chain subfamily. Expressed by the venom gland.

The protein resides in the secreted. Functionally, this three-finger toxin binds and inhibits the nicotinic acetylcholine receptor (nAChR). The polypeptide is Short neurotoxin SNTX26 (Ophiophagus hannah (King cobra)).